Reading from the N-terminus, the 397-residue chain is Mesoderm posterior protein 2 (397 aa).

Disordered stretches follow at residues 28–92 (WDST…REKL), 152–208 (QRGD…GRRP), 222–295 (SPSA…VPWT), and 351–376 (PNSEDQGPGAAFQLSEASPPQSSGLR). Composition is skewed to low complexity over residues 32 to 48 (SPASSSDSSGSCPCDGA) and 58 to 71 (SCSSRAAEAAATTP). The bHLH domain occupies 81-135 (GQRQSASEREKLRMRTLARALHELRRFLPPSLAPAGQSLTKIETLRLAIRYIGHL). 13 consecutive repeat copies span residues 179–180 (GQ), 181–182 (GQ), 183–184 (GQ), 185–186 (GQ), 187–188 (GQ), 189–190 (GQ), 191–192 (GQ), 193–194 (GQ), 195–196 (GQ), 197–198 (GQ), 199–200 (GQ), 201–202 (GQ), and 203–204 (GQ). The tract at residues 179-204 (GQGQGQGQGQGQGQGQGQGQGQGQGQ) is 13 X 2 AA tandem repeats of G-Q. A compositionally biased stretch (gly residues) spans 180–206 (QGQGQGQGQGQGQGQGQGQGQGQGQGR). Over residues 235–244 (RLGRGVHDTD) the composition is skewed to basic and acidic residues. 2 stretches are compositionally biased toward polar residues: residues 258-270 (PPYSSQGTTSDAS) and 365-375 (SEASPPQSSGL).

Degraded by the proteasome.

The protein localises to the nucleus. Transcription factor with important role in somitogenesis. Defines the rostrocaudal patterning of the somite by participating in distinct Notch pathways. Also regulates the FGF signaling pathway. Specifies the rostral half of the somites. Generates rostro-caudal polarity of somites by down-regulating in the presumptive rostral domain DLL1, a Notch ligand. Participates in the segment border formation by activating in the anterior presomitic mesoderm LFNG, a negative regulator of DLL1-Notch signaling. Acts as a strong suppressor of Notch activity. Together with MESP1 is involved in the epithelialization of somitic mesoderm and in the development of cardiac mesoderm. The chain is Mesoderm posterior protein 2 (MESP2) from Homo sapiens (Human).